The chain runs to 673 residues: Estrogen receptor beta (673 aa).

A modulating region spans residues 1 to 181 (MASSPGLDPH…SAVGKADMHF (181 aa)). NR C4-type zinc fingers lie at residues 182–202 (CAVC…CEGC) and 218–242 (CPAT…LRKC). The segment at residues 182–247 (CAVCHDYASG…RLRKCYEVGM (66 aa)) is a DNA-binding region (nuclear receptor). The 237-residue stretch at 316-552 (SPEEFISRIM…DLLLEMLDAN (237 aa)) folds into the NR LBD domain. The disordered stretch occupies residues 553 to 602 (TSSGGSQPSSSPSSETYSDQHQYPQPPSHLHPGSEQTTADHAIVPPLGPT). The segment covering 554–566 (SSGGSQPSSSPSS) has biased composition (low complexity).

Belongs to the nuclear hormone receptor family. NR3 subfamily. In terms of assembly, binds DNA as a homodimer. Can form a heterodimer with ER-alpha. In terms of tissue distribution, abundant in the liver and testes, less abundant in the ovary and barely detectable in the muscle.

The protein localises to the nucleus. In terms of biological role, binds estrogens with an affinity similar to that of ER-alpha, and activates expression of reporter genes containing estrogen response elements (ERE) in an estrogen-dependent manner. This is Estrogen receptor beta (esr2) from Micropogonias undulatus (Atlantic croaker).